Reading from the N-terminus, the 198-residue chain is Threonylcarbamoyl-AMP synthase (198 aa).

Residues 15–198 (LLKIYHIIKL…AISGQLIRRG (184 aa)) enclose the YrdC-like domain.

It belongs to the SUA5 family. TsaC subfamily.

Its subcellular location is the cytoplasm. It carries out the reaction L-threonine + hydrogencarbonate + ATP = L-threonylcarbamoyladenylate + diphosphate + H2O. Functionally, required for the formation of a threonylcarbamoyl group on adenosine at position 37 (t(6)A37) in tRNAs that read codons beginning with adenine. Catalyzes the conversion of L-threonine, HCO(3)(-)/CO(2) and ATP to give threonylcarbamoyl-AMP (TC-AMP) as the acyladenylate intermediate, with the release of diphosphate. This is Threonylcarbamoyl-AMP synthase from Baumannia cicadellinicola subsp. Homalodisca coagulata.